Here is a 167-residue protein sequence, read N- to C-terminus: 6,7-dimethyl-8-ribityllumazine synthase (167 aa).

Residues F23, 57–59 (TYE), and 81–83 (AVI) contribute to the 5-amino-6-(D-ribitylamino)uracil site. 86-87 (GT) is a (2S)-2-hydroxy-3-oxobutyl phosphate binding site. H89 (proton donor) is an active-site residue. 5-amino-6-(D-ribitylamino)uracil is bound at residue F119. R133 contacts (2S)-2-hydroxy-3-oxobutyl phosphate.

Belongs to the DMRL synthase family.

It catalyses the reaction (2S)-2-hydroxy-3-oxobutyl phosphate + 5-amino-6-(D-ribitylamino)uracil = 6,7-dimethyl-8-(1-D-ribityl)lumazine + phosphate + 2 H2O + H(+). It functions in the pathway cofactor biosynthesis; riboflavin biosynthesis; riboflavin from 2-hydroxy-3-oxobutyl phosphate and 5-amino-6-(D-ribitylamino)uracil: step 1/2. In terms of biological role, catalyzes the formation of 6,7-dimethyl-8-ribityllumazine by condensation of 5-amino-6-(D-ribitylamino)uracil with 3,4-dihydroxy-2-butanone 4-phosphate. This is the penultimate step in the biosynthesis of riboflavin. The sequence is that of 6,7-dimethyl-8-ribityllumazine synthase from Myxococcus xanthus (strain DK1622).